A 233-amino-acid polypeptide reads, in one-letter code: 27 kDa hemolymph glycoprotein (233 aa).

Residues Met-1–Ala-17 form the signal peptide. N-linked (GlcNAc...) asparagine glycosylation is found at Asn-125 and Asn-156.

The protein belongs to the UPF0408 family. Post-translationally, N-glycosylated. In terms of tissue distribution, hemolymph.

It is found in the secreted. The chain is 27 kDa hemolymph glycoprotein from Manduca sexta (Tobacco hawkmoth).